The following is a 522-amino-acid chain: Glucans biosynthesis protein G (522 aa).

The N-terminal stretch at 1 to 33 (MLDNKFGFKQRVASLRWLSAAIMLSVSAVPAWA) is a signal peptide.

Belongs to the OpgD/OpgG family.

Its subcellular location is the periplasm. Its pathway is glycan metabolism; osmoregulated periplasmic glucan (OPG) biosynthesis. In terms of biological role, involved in the biosynthesis of osmoregulated periplasmic glucans (OPGs). The chain is Glucans biosynthesis protein G from Pectobacterium carotovorum subsp. carotovorum (strain PC1).